The chain runs to 247 residues: Probable transcriptional regulatory protein LBF_0056 (247 aa).

This sequence belongs to the TACO1 family.

The protein resides in the cytoplasm. This chain is Probable transcriptional regulatory protein LBF_0056, found in Leptospira biflexa serovar Patoc (strain Patoc 1 / Ames).